Consider the following 244-residue polypeptide: MDKNDLVQKAKLAEQAERYDDMAAAMKAVTEQGGELSNEERNLLSVAYKNVVGARRSSWRVISSIEQKTEGNEKKQQMAREYREKIEAELQDICKDVLALLDNYLIANATQAESKVFYLKMKGDYYRYLSEVASGDSKKTTVENSQQAYQEAFDISKKDMQPTHPIRLGLALNFSVFYYEILNSPEQACSLAKAAFDEAIAELDTLNEDSYKDSTLIMQLLRDNLTLWTSENQGDEGDAGEGEN.

M1 bears the N-acetylmethionine mark.

This sequence belongs to the 14-3-3 family. As to quaternary structure, homodimer, and heterodimer with other family members. In terms of tissue distribution, expressed in brain, gill, heart, intestine, kidney, liver, ovary, skin, spleen and testis.

The protein resides in the cytoplasm. In terms of biological role, adapter protein implicated in the regulation of a large spectrum of both general and specialized signaling pathways. Binds to a large number of partners, usually by recognition of a phosphoserine or phosphothreonine motif. Binding generally results in the modulation of the activity of the binding partner. The sequence is that of 14-3-3 protein beta/alpha-1 from Oncorhynchus mykiss (Rainbow trout).